A 1368-amino-acid chain; its full sequence is DNA-directed RNA polymerase subunit beta (1368 aa).

This sequence belongs to the RNA polymerase beta chain family. The RNAP catalytic core consists of 2 alpha, 1 beta, 1 beta' and 1 omega subunit. When a sigma factor is associated with the core the holoenzyme is formed, which can initiate transcription.

It catalyses the reaction RNA(n) + a ribonucleoside 5'-triphosphate = RNA(n+1) + diphosphate. DNA-dependent RNA polymerase catalyzes the transcription of DNA into RNA using the four ribonucleoside triphosphates as substrates. This chain is DNA-directed RNA polymerase subunit beta, found in Burkholderia lata (strain ATCC 17760 / DSM 23089 / LMG 22485 / NCIMB 9086 / R18194 / 383).